The following is a 357-amino-acid chain: Phosphoribosylformylglycinamidine cyclo-ligase (357 aa).

It belongs to the AIR synthase family.

It localises to the cytoplasm. It carries out the reaction 2-formamido-N(1)-(5-O-phospho-beta-D-ribosyl)acetamidine + ATP = 5-amino-1-(5-phospho-beta-D-ribosyl)imidazole + ADP + phosphate + H(+). It functions in the pathway purine metabolism; IMP biosynthesis via de novo pathway; 5-amino-1-(5-phospho-D-ribosyl)imidazole from N(2)-formyl-N(1)-(5-phospho-D-ribosyl)glycinamide: step 2/2. This Nitrobacter winogradskyi (strain ATCC 25391 / DSM 10237 / CIP 104748 / NCIMB 11846 / Nb-255) protein is Phosphoribosylformylglycinamidine cyclo-ligase.